We begin with the raw amino-acid sequence, 169 residues long: Disulfide bond formation protein B (169 aa).

Over 1-13 the chain is Cytoplasmic; that stretch reads MQALNHFSRIRLS. The helical transmembrane segment at 14–30 threads the bilayer; sequence WFLLLLCIIFFEASALT. The Periplasmic portion of the chain corresponds to 31-48; that stretch reads FQHIMKLPPCVMCIYERV. Cys-40 and Cys-43 are disulfide-bonded. A helical membrane pass occupies residues 49–64; the sequence is AMMGIGGAAIIGLLNP. Over 65-71 the chain is Cytoplasmic; the sequence is NNLIIRW. A helical transmembrane segment spans residues 72-89; it reads CGFIAWGISAGWGLKLAL. The Periplasmic segment spans residues 90-144; that stretch reads EHVDFQLNPSPFSTCDLFVTFPSWAPLNKWAPWMFEAYGDCSKIVWQFLTLTMPQ. Cys-104 and Cys-130 are joined by a disulfide. The chain crosses the membrane as a helical span at residues 145-163; sequence WLVIIFAGNLIALAIFVIA. The Cytoplasmic portion of the chain corresponds to 164–169; that stretch reads QFFNKK.

Belongs to the DsbB family.

The protein localises to the cell inner membrane. Required for disulfide bond formation in some periplasmic proteins. Acts by oxidizing the DsbA protein. The chain is Disulfide bond formation protein B from Aliivibrio fischeri (strain ATCC 700601 / ES114) (Vibrio fischeri).